We begin with the raw amino-acid sequence, 151 residues long: Chaperonin GroEL (151 aa).

An ATP-binding site is contributed by 41–45 (DGTTT).

The protein belongs to the chaperonin (HSP60) family. As to quaternary structure, forms a cylinder of 14 subunits composed of two heptameric rings stacked back-to-back. Interacts with the co-chaperonin GroES.

It is found in the cytoplasm. The enzyme catalyses ATP + H2O + a folded polypeptide = ADP + phosphate + an unfolded polypeptide.. In terms of biological role, together with its co-chaperonin GroES, plays an essential role in assisting protein folding. The GroEL-GroES system forms a nano-cage that allows encapsulation of the non-native substrate proteins and provides a physical environment optimized to promote and accelerate protein folding. The sequence is that of Chaperonin GroEL from Mycobacterium avium.